Reading from the N-terminus, the 203-residue chain is Cardiotrophin-1 (203 aa).

The protein belongs to the IL-6 superfamily. In terms of tissue distribution, expressed in the ventricle and atrium of adult rats. Also detected in the lung, kidney, liver, skeletal muscle, stomach and urinary bladder. Not detected in brain, colon, testis, spleen or thymus. Overexpressed in the ventricles in the case of hypertension and hypertrophy.

It is found in the secreted. In terms of biological role, induces cardiac myocyte hypertrophy in vitro. Binds to and activates the ILST/gp130 receptor. The chain is Cardiotrophin-1 (Ctf1) from Rattus norvegicus (Rat).